Reading from the N-terminus, the 345-residue chain is N-acetyl-gamma-glutamyl-phosphate reductase (345 aa).

Residue Cys-149 is part of the active site.

The protein belongs to the NAGSA dehydrogenase family. Type 1 subfamily.

The protein resides in the cytoplasm. It catalyses the reaction N-acetyl-L-glutamate 5-semialdehyde + phosphate + NADP(+) = N-acetyl-L-glutamyl 5-phosphate + NADPH + H(+). It functions in the pathway amino-acid biosynthesis; L-arginine biosynthesis; N(2)-acetyl-L-ornithine from L-glutamate: step 3/4. In terms of biological role, catalyzes the NADPH-dependent reduction of N-acetyl-5-glutamyl phosphate to yield N-acetyl-L-glutamate 5-semialdehyde. In Geobacillus sp. (strain WCH70), this protein is N-acetyl-gamma-glutamyl-phosphate reductase.